Consider the following 129-residue polypeptide: MIEVQNVKLGTLISVFFFGMIGGTLRYLLSLKLASTGTILVNLIGSFCLAFLTYYVIERQKLPAWLSTGLGTGMVGAFTTFSTFTVDILGLSTFTDATFYLLISVVGGFLLAYTGMILGIKLGKVGDRR.

The next 4 membrane-spanning stretches (helical) occupy residues 9-29, 37-57, 74-94, and 100-120; these read LGTLISVFFFGMIGGTLRYLL, GTILVNLIGSFCLAFLTYYVI, MVGAFTTFSTFTVDILGLSTF, and YLLISVVGGFLLAYTGMILGI. 2 residues coordinate Na(+): Gly-76 and Thr-79.

The protein belongs to the fluoride channel Fluc/FEX (TC 1.A.43) family.

It is found in the cell membrane. It catalyses the reaction fluoride(in) = fluoride(out). Na(+) is not transported, but it plays an essential structural role and its presence is essential for fluoride channel function. Its function is as follows. Fluoride-specific ion channel. Important for reducing fluoride concentration in the cell, thus reducing its toxicity. This is Fluoride-specific ion channel FluC 2 from Ligilactobacillus salivarius (strain UCC118) (Lactobacillus salivarius).